The chain runs to 374 residues: Lipoyl synthase, mitochondrial (374 aa).

Residues methionine 1–phenylalanine 19 constitute a mitochondrion transit peptide. Residues cysteine 103, cysteine 108, cysteine 114, cysteine 134, cysteine 138, cysteine 141, and serine 350 each coordinate [4Fe-4S] cluster. Residues glutamate 119–arginine 339 form the Radical SAM core domain.

This sequence belongs to the radical SAM superfamily. Lipoyl synthase family. The cofactor is [4Fe-4S] cluster. In terms of tissue distribution, expressed in leaves and flowers, but not in roots. Expressed in roots, rosette leaves, cauline leaves, stems, flowers and siliques.

Its subcellular location is the mitochondrion. It catalyses the reaction [[Fe-S] cluster scaffold protein carrying a second [4Fe-4S](2+) cluster] + N(6)-octanoyl-L-lysyl-[protein] + 2 oxidized [2Fe-2S]-[ferredoxin] + 2 S-adenosyl-L-methionine + 4 H(+) = [[Fe-S] cluster scaffold protein] + N(6)-[(R)-dihydrolipoyl]-L-lysyl-[protein] + 4 Fe(3+) + 2 hydrogen sulfide + 2 5'-deoxyadenosine + 2 L-methionine + 2 reduced [2Fe-2S]-[ferredoxin]. It functions in the pathway protein modification; protein lipoylation via endogenous pathway; protein N(6)-(lipoyl)lysine from octanoyl-[acyl-carrier-protein]: step 2/2. Catalyzes the radical-mediated insertion of two sulfur atoms into the C-6 and C-8 positions of the octanoyl moiety bound to the lipoyl domains of lipoate-dependent enzymes, thereby converting the octanoylated domains into lipoylated derivatives. Together with LIP2 is essential for mitochondrial protein lipoylation during seed development. Required for the lipoylation of mitochondrial pyruvate dehydrogenase component E2 proteins in leaves and roots. The protein is Lipoyl synthase, mitochondrial of Arabidopsis thaliana (Mouse-ear cress).